The following is a 122-amino-acid chain: Large ribosomal subunit protein uL18 (122 aa).

The segment covering 1–11 has biased composition (basic and acidic residues); that stretch reads MLKKPDRNALR. The disordered stretch occupies residues 1–22; sequence MLKKPDRNALRDKRRRRVRKKI. Positions 12 to 22 are enriched in basic residues; that stretch reads DKRRRRVRKKI.

Belongs to the universal ribosomal protein uL18 family. In terms of assembly, part of the 50S ribosomal subunit; part of the 5S rRNA/L5/L18/L25 subcomplex. Contacts the 5S and 23S rRNAs.

Functionally, this is one of the proteins that bind and probably mediate the attachment of the 5S RNA into the large ribosomal subunit, where it forms part of the central protuberance. The chain is Large ribosomal subunit protein uL18 from Pelotomaculum thermopropionicum (strain DSM 13744 / JCM 10971 / SI).